Consider the following 885-residue polypeptide: MADTTVEKLATEVGKSVERLIEQFSQAGIKKGHTDNVSEAEKQQLLDYLKKQHGGDNAPTKMTLQRKTVSTLSVAGNGGQSKDVKVEVRKTRTFVKRDANDAVLKAEEEAKAKAEAEAKAKAEAEAKAKAEAEVKAKAEAEAKAKAEAEAKAKAKAAAEVKVIKELSPEAEAARVEAERLKAVQAEATKRKQDEEAAKAAEKARLLAEENSKRWAEEERQRLEAERYSDHHITTSKVARAAEDSSDMDEEKRGRRARNKNTAKSKRGGKDARDGREKHMRNRSTAPESMAHGFNKPVAAVNRDVRIGETVTVAELAHLMAVKATEIIKQMMKMGSMVTINQVLDQETAQLVAEEMGHKVVLIRENELEQQVLSERDEEGVVKLEPRAPVVTIMGHVDHGKTSLLDYIRRAKVAAGEAGGITQHIGAYHVETDNGMITFLDTPGHAAFTAMRARGAKATDIVVLVVAADDGVMPQTIEAIQHAKAGNVPLIVAVNKMDKPEADIDRVKSELAQHGVMSEDWGGDNMFAFVSAKTGAGVDDLLEGILLQAEVLELKAVRDGMAAGVVIESQLDKGRGPVATILVQEGTLRQGDIVLCGLEYGKIRAMKDENGRSITEAGPSIPVEILGLSGVPSAGDEATVVRDERKAREVALYRQGKFRDVKLARQQKSKLENMFANMTEGEVKELNIVLKADVQGSLEAITDSLMGLSTDEVKVNIIARGVGALTETDATLAAASNAIMVGFNVRADAQARKTIESESVDLRYYSVIYNLIDEVKAAMTGMLSPEFKQQIIGLAEVRDVFKSPKLGAIAGCMVTEGTIKRSAPIRVLRDNVVIFEGELESLRRFKDDVNEVRNGMECGIGVKNYNDVRVGDQIEVFETVEVARTL.

Disordered regions lie at residues 135-159 (KAKA…AAAE) and 184-289 (QAEA…PESM). Over residues 184-232 (QAEATKRKQDEEAAKAAEKARLLAEENSKRWAEEERQRLEAERYSDHHI) the composition is skewed to basic and acidic residues. Basic residues predominate over residues 253–266 (GRRARNKNTAKSKR). Residues 267 to 276 (GGKDARDGRE) show a composition bias toward basic and acidic residues. The tr-type G domain occupies 385-554 (PRAPVVTIMG…LLQAEVLELK (170 aa)). Residues 394–401 (GHVDHGKT) form a G1 region. 394 to 401 (GHVDHGKT) lines the GTP pocket. A G2 region spans residues 419–423 (GITQH). A G3 region spans residues 440–443 (DTPG). Residues 440-444 (DTPGH) and 494-497 (NKMD) contribute to the GTP site. The G4 stretch occupies residues 494 to 497 (NKMD). A G5 region spans residues 530–532 (SAK).

This sequence belongs to the TRAFAC class translation factor GTPase superfamily. Classic translation factor GTPase family. IF-2 subfamily.

Its subcellular location is the cytoplasm. Functionally, one of the essential components for the initiation of protein synthesis. Protects formylmethionyl-tRNA from spontaneous hydrolysis and promotes its binding to the 30S ribosomal subunits. Also involved in the hydrolysis of GTP during the formation of the 70S ribosomal complex. The protein is Translation initiation factor IF-2 of Shewanella sp. (strain MR-7).